Reading from the N-terminus, the 126-residue chain is Holo-[acyl-carrier-protein] synthase (126 aa).

Asp9 and Glu57 together coordinate Mg(2+).

It belongs to the P-Pant transferase superfamily. AcpS family. The cofactor is Mg(2+).

It is found in the cytoplasm. The catalysed reaction is apo-[ACP] + CoA = holo-[ACP] + adenosine 3',5'-bisphosphate + H(+). Its function is as follows. Transfers the 4'-phosphopantetheine moiety from coenzyme A to a Ser of acyl-carrier-protein. The polypeptide is Holo-[acyl-carrier-protein] synthase (Pseudoalteromonas atlantica (strain T6c / ATCC BAA-1087)).